We begin with the raw amino-acid sequence, 112 residues long: Mediator of RNA polymerase II transcription subunit 22 (112 aa).

The segment at 83–112 is disordered; it reads KPEDGGEGQLADELLDKIEDTSDGVDKETA. Residues 96 to 112 are compositionally biased toward basic and acidic residues; that stretch reads LLDKIEDTSDGVDKETA.

This sequence belongs to the Mediator complex subunit 22 family. Component of the Mediator complex.

The protein localises to the nucleus. Its function is as follows. Component of the Mediator complex, a coactivator involved in the regulated transcription of nearly all RNA polymerase II-dependent genes. Mediator functions as a bridge to convey information from gene-specific regulatory proteins to the basal RNA polymerase II transcription machinery. Mediator is recruited to promoters by direct interactions with regulatory proteins and serves as a scaffold for the assembly of a functional preinitiation complex with RNA polymerase II and the general transcription factors. The chain is Mediator of RNA polymerase II transcription subunit 22 (SRB6) from Yarrowia lipolytica (strain CLIB 122 / E 150) (Yeast).